The sequence spans 95 residues: Small ribosomal subunit protein uS19 (95 aa).

The protein belongs to the universal ribosomal protein uS19 family.

Its function is as follows. Protein S19 forms a complex with S13 that binds strongly to the 16S ribosomal RNA. The chain is Small ribosomal subunit protein uS19 from Bdellovibrio bacteriovorus (strain ATCC 15356 / DSM 50701 / NCIMB 9529 / HD100).